A 512-amino-acid polypeptide reads, in one-letter code: D-alanine--D-alanyl carrier protein ligase (512 aa).

152-153 (TS) is an ATP binding site. Asp-199 provides a ligand contact to D-alanine. 294-299 (NAYGPT) serves as a coordination point for ATP. Val-303 is a D-alanine binding site. ATP-binding positions include Asp-385, 397–400 (YGGR), and Lys-499. Lys-499 is a binding site for D-alanine.

This sequence belongs to the ATP-dependent AMP-binding enzyme family. DltA subfamily.

It is found in the cytoplasm. It catalyses the reaction holo-[D-alanyl-carrier protein] + D-alanine + ATP = D-alanyl-[D-alanyl-carrier protein] + AMP + diphosphate. It participates in cell wall biogenesis; lipoteichoic acid biosynthesis. Catalyzes the first step in the D-alanylation of lipoteichoic acid (LTA), the activation of D-alanine and its transfer onto the D-alanyl carrier protein (Dcp) DltC. In an ATP-dependent two-step reaction, forms a high energy D-alanyl-AMP intermediate, followed by transfer of the D-alanyl residue as a thiol ester to the phosphopantheinyl prosthetic group of the Dcp. D-alanylation of LTA plays an important role in modulating the properties of the cell wall in Gram-positive bacteria, influencing the net charge of the cell wall. This is D-alanine--D-alanyl carrier protein ligase from Streptococcus pyogenes serotype M18 (strain MGAS8232).